The primary structure comprises 122 residues: Large ribosomal subunit protein uL14c (122 aa).

It belongs to the universal ribosomal protein uL14 family. As to quaternary structure, part of the 50S ribosomal subunit.

The protein resides in the plastid. The protein localises to the chloroplast. Binds to 23S rRNA. This Anthoceros angustus (Hornwort) protein is Large ribosomal subunit protein uL14c.